Reading from the N-terminus, the 123-residue chain is Protein Wnt-7a (123 aa).

S1 is lipidated: O-palmitoleoyl serine; by PORCN. Residues 33–61 (VEPVRASRNKRPTFLKIKKPLSYRKPMDT) are disordered linker. Cysteines 89 and 104 form a disulfide. N-linked (GlcNAc...) asparagine glycosylation is present at N90.

This sequence belongs to the Wnt family. As to quaternary structure, forms a soluble 1:1 complex with AFM; this prevents oligomerization and is required for prolonged biological activity. The complex with AFM may represent the physiological form in body fluids. Interacts with FZD5. Interacts with PORCN. Post-translationally, palmitoleoylation is required for efficient binding to frizzled receptors. Depalmitoleoylation leads to Wnt signaling pathway inhibition.

The protein resides in the secreted. Its subcellular location is the extracellular space. It is found in the extracellular matrix. Its function is as follows. Ligand for members of the frizzled family of seven transmembrane receptors that functions in the canonical Wnt/beta-catenin signaling pathway. Plays an important role in embryonic development, including dorsal versus ventral patterning during limb development, skeleton development and urogenital tract development. Required for central nervous system (CNS) angiogenesis and blood-brain barrier regulation. This is Protein Wnt-7a (WNT7A) from Meleagris gallopavo (Wild turkey).